The primary structure comprises 766 residues: BMP/retinoic acid-inducible neural-specific protein 3 (766 aa).

Positions 1–33 (MIWRSRAGAELFSLMALWEWIALSLHCWVLAVA) are cleaved as a signal peptide. Residues 74–264 (RYKIYREFGR…FVQAALSYIA (191 aa)) form the MACPF domain. Asn168, Asn337, Asn456, Asn562, Asn609, and Asn641 each carry an N-linked (GlcNAc...) asparagine glycan.

The protein belongs to the BRINP family. Strongly expressed in oral keratinocytes compared to the weak expression in tongue squamous cell carcinoma (SCC). Expressed in endothelial and aortic smooth muscle cells. Overexpressed in gonadotropinomas compared to normal pituitarie tissues.

The protein localises to the secreted. The protein resides in the mitochondrion. Its function is as follows. Inhibits neuronal cell proliferation by negative regulation of the cell cycle transition. Promotes pituitary gonadotrope cell proliferation, migration and invasion, when overexpressed. May play a role in cell pituitary tumor development. The polypeptide is BMP/retinoic acid-inducible neural-specific protein 3 (BRINP3) (Homo sapiens (Human)).